An 876-amino-acid polypeptide reads, in one-letter code: Radial spoke head 10 homolog B (876 aa).

2 stretches are compositionally biased toward basic and acidic residues: residues 1 to 16 (MVKE…DKSA) and 57 to 66 (PKRDSEHTYQ). Positions 1–72 (MVKEKKKADK…HTYQSEDETQ (72 aa)) are disordered. 10 MORN repeats span residues 86-108 (YEGE…GGNT), 109-131 (YHGM…DGLK), 132-154 (YEGD…DGST), 155-177 (YEGE…TQPV), 179-201 (YIGH…QEGT), 204-226 (YEGD…SGNI), 227-249 (YEGQ…TTNE), 251-273 (YTGH…LKRI), 284-306 (YIGA…SGAM), and 307-329 (YEGE…NGRV). 2 disordered regions span residues 360–386 (SQRS…LDGS) and 841–876 (EPPE…KKKK). Positions 373-386 (ADREPETLRKLDGS) are enriched in basic and acidic residues. Positions 752 to 841 (EKYEKSKDEQ…FELDITVLKE (90 aa)) form a coiled coil.

In terms of assembly, interacts with RSPH6A. Does not appear to be part of the axonemal radial spoke complexes 1 or 2.

It is found in the cytoplasm. The protein resides in the cytoskeleton. It localises to the cilium axoneme. Its subcellular location is the cell projection. The protein localises to the cilium. It is found in the flagellum. In terms of biological role, may function as part of the axonemal radial spoke complex 3 (RS3). Radial spoke complexes are important for ciliary motility. The chain is Radial spoke head 10 homolog B (Rsph10b) from Rattus norvegicus (Rat).